The following is a 506-amino-acid chain: Tabersonine 16-hydroxylase 1 (506 aa).

The chain crosses the membrane as a helical span at residues 1–21; the sequence is MEFYYFLYLAFLLFCFILSKT. Cysteine 447 provides a ligand contact to heme.

Belongs to the cytochrome P450 family. It depends on heme as a cofactor. As to expression, predominantly expressed in young leaves of mature plants. Low expression in roots and flowers, but not detected in stems and old leaves. Found predominantly in leaf epidermis. Barely detected in roots, internodes, young and mature leaves, and flower buds, but relatively abundant in fully developed flowers. Not detected in leaf epidermal cells.

Its subcellular location is the endoplasmic reticulum membrane. The catalysed reaction is (-)-tabersonine + reduced [NADPH--hemoprotein reductase] + O2 = 16-hydroxytabersonine + oxidized [NADPH--hemoprotein reductase] + H2O + H(+). The protein operates within alkaloid biosynthesis; vindoline biosynthesis. Its function is as follows. Involved in the flower biosynthesis of vindoline, a precursor of vinblastine and vincristine. Hydroxylates specifically tabersonine, 2,3-dihydrotabersonine and 2,3-dihydro-3-hydroxytabersonine, but has no activity with naringenin, tryptamine, secologanin, strictosidine, ajmalicine, vindoline and catharanthine. In Catharanthus roseus (Madagascar periwinkle), this protein is Tabersonine 16-hydroxylase 1.